Reading from the N-terminus, the 473-residue chain is MTDRIELSACTSMMVGKNASIDGSTMISRNEDRFYAIHPKRFFVQPAVHNRHETYVSKYNGLTMPLPEEGYRYTSTPNGDLSDGLNEEDGINEKNVALSATESVYANERVLAYDPLIKNGLAEDSMCSLVLPYINSAREGVKLMGDIVTKYGSAEGNGIQYSDENEVWYQEIVTGHHWVAAKIPDDCYAVAANQVAIENIDFNDPDNYMWSEGIQEFVSGNHLNPSETEWNFRKIFGTDTEKDRHYNTPRVWYAQRYLNPEIKQEPESSDLPFIRKANRKLSVEDVQYVLKSHYNETEYDPLGNGTEEQKTTYRAISLSRTQNSHICQIRNNVPDAVKGVQWLGFGVPTFCPHVPFFTNANDTDETYRELPEKMTLKNAYWLHEALAMIVESHYGAFKQADIDYQKALSEWARTKIAATDKAIENQADAVAFLTAQNHEIATHYNEATTDLLAQLVTEGTQLSKLTFVMDKNL.

The active site involves cysteine 10.

It belongs to the peptidase C69 family.

The enzyme catalyses an L-aminoacyl-L-amino acid + H2O = 2 an L-alpha-amino acid. This chain is Probable dipeptidase, found in Latilactobacillus sakei (Lactobacillus sakei).